The chain runs to 203 residues: Large ribosomal subunit protein uL3 (203 aa).

The protein belongs to the universal ribosomal protein uL3 family. As to quaternary structure, part of the 50S ribosomal subunit. Forms a cluster with proteins L14 and L19.

Its function is as follows. One of the primary rRNA binding proteins, it binds directly near the 3'-end of the 23S rRNA, where it nucleates assembly of the 50S subunit. The chain is Large ribosomal subunit protein uL3 from Christiangramia forsetii (strain DSM 17595 / CGMCC 1.15422 / KT0803) (Gramella forsetii).